A 78-amino-acid chain; its full sequence is Large ribosomal subunit protein uL24 (78 aa).

The disordered stretch occupies residues 52-78 (PSEKTPNGGHVNKEMPIDISNVAKVEG).

This sequence belongs to the universal ribosomal protein uL24 family. As to quaternary structure, part of the 50S ribosomal subunit.

In terms of biological role, one of two assembly initiator proteins, it binds directly to the 5'-end of the 23S rRNA, where it nucleates assembly of the 50S subunit. One of the proteins that surrounds the polypeptide exit tunnel on the outside of the subunit. This is Large ribosomal subunit protein uL24 from Campylobacter concisus (strain 13826).